Consider the following 451-residue polypeptide: Chromosomal replication initiator protein DnaA (451 aa).

The interval 1-77 (MTENEQIFWN…EVYNAQISVD (77 aa)) is domain I, interacts with DnaA modulators. A domain II region spans residues 77–110 (DYVFEEDLMIEQNQTKINQKPKQQALNSLPTVTS). The interval 111–329 (DLNSKYSFEN…GALKDISLVA (219 aa)) is domain III, AAA+ region. 4 residues coordinate ATP: glycine 155, glycine 157, lysine 158, and threonine 159. The interval 330 to 451 (NFKQIDTITV…EIETIKNKIK (122 aa)) is domain IV, binds dsDNA.

Belongs to the DnaA family. Oligomerizes as a right-handed, spiral filament on DNA at oriC.

It is found in the cytoplasm. Its function is as follows. Plays an essential role in the initiation and regulation of chromosomal replication. ATP-DnaA binds to the origin of replication (oriC) to initiate formation of the DNA replication initiation complex once per cell cycle. Binds the DnaA box (a 9 base pair repeat at the origin) and separates the double-stranded (ds)DNA. Forms a right-handed helical filament on oriC DNA; dsDNA binds to the exterior of the filament while single-stranded (ss)DNA is stabiized in the filament's interior. The ATP-DnaA-oriC complex binds and stabilizes one strand of the AT-rich DNA unwinding element (DUE), permitting loading of DNA polymerase. After initiation quickly degrades to an ADP-DnaA complex that is not apt for DNA replication. Binds acidic phospholipids. The half-life of ATP-DnaA is 12 minutes at 37 degrees Celsius, in E.coli the half-life is about 41 minutes. This Streptococcus pyogenes serotype M1 protein is Chromosomal replication initiator protein DnaA.